The following is a 94-amino-acid chain: Co-chaperonin GroES (94 aa).

This sequence belongs to the GroES chaperonin family. As to quaternary structure, heptamer of 7 subunits arranged in a ring. Interacts with the chaperonin GroEL.

Its subcellular location is the cytoplasm. Together with the chaperonin GroEL, plays an essential role in assisting protein folding. The GroEL-GroES system forms a nano-cage that allows encapsulation of the non-native substrate proteins and provides a physical environment optimized to promote and accelerate protein folding. GroES binds to the apical surface of the GroEL ring, thereby capping the opening of the GroEL channel. The protein is Co-chaperonin GroES of Latilactobacillus sakei subsp. sakei (strain 23K) (Lactobacillus sakei subsp. sakei).